Reading from the N-terminus, the 360-residue chain is NAD(P)H-quinone oxidoreductase subunit 1, chloroplastic (360 aa).

8 consecutive transmembrane segments (helical) span residues 30 to 50, 98 to 118, 127 to 147, 165 to 185, 203 to 223, 248 to 268, 297 to 317, and 340 to 360; these read FLPI…LVWL, FSIG…VIPF, FNIG…GLLM, AAQS…ISLL, FWGW…ISSL, YSGI…LISS, IFGT…FLFI, and FLLP…VFSL.

This sequence belongs to the complex I subunit 1 family. In terms of assembly, NDH is composed of at least 16 different subunits, 5 of which are encoded in the nucleus.

It is found in the plastid. It localises to the chloroplast thylakoid membrane. It catalyses the reaction a plastoquinone + NADH + (n+1) H(+)(in) = a plastoquinol + NAD(+) + n H(+)(out). The enzyme catalyses a plastoquinone + NADPH + (n+1) H(+)(in) = a plastoquinol + NADP(+) + n H(+)(out). Functionally, NDH shuttles electrons from NAD(P)H:plastoquinone, via FMN and iron-sulfur (Fe-S) centers, to quinones in the photosynthetic chain and possibly in a chloroplast respiratory chain. The immediate electron acceptor for the enzyme in this species is believed to be plastoquinone. Couples the redox reaction to proton translocation, and thus conserves the redox energy in a proton gradient. The chain is NAD(P)H-quinone oxidoreductase subunit 1, chloroplastic from Aethionema grandiflorum (Persian stone-cress).